We begin with the raw amino-acid sequence, 165 residues long: Sorting nexin-12 (165 aa).

The disordered stretch occupies residues 1–20; it reads MSDTAVADTRRLNSKPQDLT. S2 is modified (N-acetylserine). The residue at position 23 (Y23) is a Phosphotyrosine. Residues 28–151 enclose the PX domain; that stretch reads NFLEIDIFNP…HMFLQEEAID (124 aa). The a 1,2-diacyl-sn-glycero-3-phospho-(1D-myo-inositol-3-phosphate) site is built by R71, S73, K96, and R118. S73 is modified (phosphoserine).

It belongs to the sorting nexin family.

Its subcellular location is the membrane. Its function is as follows. May be involved in several stages of intracellular trafficking. In Mus musculus (Mouse), this protein is Sorting nexin-12 (Snx12).